The primary structure comprises 274 residues: Orotidine 5'-phosphate decarboxylase (274 aa).

Lys96 serves as the catalytic Proton donor.

The protein belongs to the OMP decarboxylase family. Type 2 subfamily.

The catalysed reaction is orotidine 5'-phosphate + H(+) = UMP + CO2. It functions in the pathway pyrimidine metabolism; UMP biosynthesis via de novo pathway; UMP from orotate: step 2/2. The protein is Orotidine 5'-phosphate decarboxylase of Bacteroides fragilis (strain ATCC 25285 / DSM 2151 / CCUG 4856 / JCM 11019 / LMG 10263 / NCTC 9343 / Onslow / VPI 2553 / EN-2).